We begin with the raw amino-acid sequence, 351 residues long: Dihydroorotate dehydrogenase (quinone) (351 aa).

FMN-binding positions include 61–65 (AGLDK) and T85. K65 is a binding site for substrate. 110 to 114 (NRMGF) provides a ligand contact to substrate. FMN contacts are provided by N139 and N172. Residue N172 coordinates substrate. Catalysis depends on S175, which acts as the Nucleophile. N177 serves as a coordination point for substrate. Residues K217 and T245 each coordinate FMN. Substrate is bound at residue 246-247 (NT). Residues G268, G297, and 318 to 319 (YT) each bind FMN.

The protein belongs to the dihydroorotate dehydrogenase family. Type 2 subfamily. As to quaternary structure, monomer. The cofactor is FMN.

Its subcellular location is the cell membrane. The enzyme catalyses (S)-dihydroorotate + a quinone = orotate + a quinol. The protein operates within pyrimidine metabolism; UMP biosynthesis via de novo pathway; orotate from (S)-dihydroorotate (quinone route): step 1/1. Its function is as follows. Catalyzes the conversion of dihydroorotate to orotate with quinone as electron acceptor. The polypeptide is Dihydroorotate dehydrogenase (quinone) (Xylella fastidiosa (strain M23)).